The primary structure comprises 1049 residues: MALVTLQRSPTPSAASSSASNSELEAGSEEDRKLNLSLSESFFMVKGAALFLQQGSSPQGQRSLQHPHKHAGDLPQHLQVMINLLRCEDRIKLAVRLESAWADRVRYMVVVYSSGRQDTEENILLGVDFSSKESKSCTIGMVLRLWSDTKIHLDGDGGFSVSTAGRMHIFKPVSVQAMWSALQVLHKACEVARRHNYFPGGVALIWATYYESCISSEQSCINEWNAMQDLESTRPDSPALFVDKPTEGERTERLIKAKLRSIMMSQDLENVTSKEIRNELEKQMNCNLKELKEFIDNEMLLILGQMDKPSLIFDHLYLGSEWNASNLEELQGSGVDYILNVTREIDNFFPGLFAYHNIRVYDEETTDLLAHWNEAYHFINKAKRNHSKCLVHCKMGVSRSASTVIAYAMKEFGWPLEKAYNYVKQKRSITRPNAGFMRQLSEYEGILDASKQRHNKLWRQQTDSSLQQPVDDPAGPGDFLPETPDGTPESQLPFLDDAAQPGLGPPLPCCFRRLSDPLLPSPEDETGSLVHLEDPEREALLEEAAPPAEVHRPARQPQQGSGLCEKDVKKKLEFGSPKGRSGSLLQVEETEREEGLGAGRWGQLPTQLDQNLLNSENLNNNSKRSCPNGMEDDAIFGILNKVKPSYKSCADCMYPTASGAPEASRERCEDPNAPAICTQPAFLPHITSSPVAHLASRSRVPEKPASGPTEPPPFLPPAGSRRADTSGPGAGAALEPPASLLEPSRETPKVLPKSLLLKNSHCDKNPPSTEVVIKEESSPKKDMKPAKDLRLLFSNESEKPTTNSYLMQHQESIIQLQKAGLVRKHTKELERLKSVPADPAPPSRDGPASRLEASIPEESQDPAALHELGPLVMPSQAGSDEKSEAAPASLEGGSLKSPPPFFYRLDHTSSFSKDFLKTICYTPTSSSMSSNLTRSSSSDSIHSVRGKPGLVKQRTQEIETRLRLAGLTVSSPLKRSHSLAKLGSLTFSTEDLSSEADPSTVADSQDTTLSESSFLHEPQGTPRDPAATSKPSGKPAPENLKSPSWMSKS.

Polar residues predominate over residues 1–12; it reads MALVTLQRSPTP. Residues 1–28 are disordered; that stretch reads MALVTLQRSPTPSAASSSASNSELEAGS. Ala2 carries the N-acetylalanine modification. The segment covering 13–25 has biased composition (low complexity); sequence SAASSSASNSELE. Phosphoserine is present on residues Ser37 and Ser57. A DEK-C domain is found at 249-304; the sequence is ERTERLIKAKLRSIMMSQDLENVTSKEIRNELEKQMNCNLKELKEFIDNEMLLILG. A Tyrosine-protein phosphatase domain is found at 308–449; that stretch reads KPSLIFDHLY…LSEYEGILDA (142 aa). Cys393 acts as the Phosphocysteine intermediate in catalysis. The tract at residues 456–499 is disordered; it reads KLWRQQTDSSLQQPVDDPAGPGDFLPETPDGTPESQLPFLDDAA. A compositionally biased stretch (polar residues) spans 458–468; the sequence is WRQQTDSSLQQ. The residue at position 515 (Ser515) is a Phosphoserine. Disordered regions lie at residues 544-603, 693-787, 825-899, and 923-955; these read AAPP…RWGQ, HLAS…KPAK, HTKE…KSPP, and PTSS…KQRT. Over residues 564–573 the composition is skewed to basic and acidic residues; sequence CEKDVKKKLE. Ser576 carries the phosphoserine modification. The segment covering 731 to 742 has biased composition (low complexity); it reads GAALEPPASLLE. The segment covering 772–787 has biased composition (basic and acidic residues); the sequence is VIKEESSPKKDMKPAK. Phosphoserine is present on Ser897. The tract at residues 897–1049 is interaction with YWHAG; that stretch reads SPPPFFYRLD…LKSPSWMSKS (153 aa). The segment covering 925-943 has biased composition (low complexity); it reads SSSMSSNLTRSSSSDSIHS. A Phosphoserine modification is found at Ser978. The tract at residues 989-1049 is disordered; that stretch reads TEDLSSEADP…LKSPSWMSKS (61 aa). Over residues 1001-1013 the composition is skewed to polar residues; sequence VADSQDTTLSESS.

It belongs to the protein-tyrosine phosphatase family. Interacts with actin and this stimulates phosphatase activity. Also interacts with LIMK1 and with the 14-3-3 proteins YWHAB, YWHAG, YWHAQ, and YWHAZ. Interaction with 14-3-3 proteins inhibits phosphatase activity and also blocks recruitment to lamellipodia and stimulation by actin. In terms of processing, phosphorylated. Inhibitory phosphorylation by PAK4 promotes binding to YWHAZ. Phosphorylation at Ser-978 is decreased by stimuli which promote actin reorganization and lamellipodia formation. Can be dephosphorylated and activated by PPP3CA/calcineurin A. Phosphorylation decreases immediately prior to telophase.

It is found in the cytoplasm. The protein localises to the cytoskeleton. Its subcellular location is the cell projection. The protein resides in the lamellipodium. It localises to the cleavage furrow. It is found in the midbody. It catalyses the reaction O-phospho-L-tyrosyl-[protein] + H2O = L-tyrosyl-[protein] + phosphate. The enzyme catalyses O-phospho-L-seryl-[protein] + H2O = L-seryl-[protein] + phosphate. The catalysed reaction is O-phospho-L-threonyl-[protein] + H2O = L-threonyl-[protein] + phosphate. Protein phosphatase which regulates actin filament dynamics. Dephosphorylates and activates the actin binding/depolymerizing factor cofilin, which subsequently binds to actin filaments and stimulates their disassembly. Inhibitory phosphorylation of cofilin is mediated by LIMK1, which may also be dephosphorylated and inactivated by this protein. The sequence is that of Protein phosphatase Slingshot homolog 1 from Homo sapiens (Human).